A 404-amino-acid chain; its full sequence is E3 ubiquitin-protein ligase RNF128 (404 aa).

Residues 1 to 31 (MGALKMRCQCFPLPYLSLLALLLLNLSLTRA) form the signal peptide. A PA domain is found at 62–166 (DSPIERAAGL…LKGNEIVDLI (105 aa)). Residues 191-211 (IFFVSVSFFIVTAATVGYFIF) traverse the membrane as a helical segment. Residues 260–301 (CAVCIEPYKPSDVVRILTCNHFFHKNCIDPWLLEHRTCPMCK) form an RING-type; atypical zinc finger. The segment at 336–356 (ITEEENHSETASSGYASVRGG) is disordered.

In terms of processing, auto-ubiquitinated. In terms of tissue distribution, expressed in the cement gland, cranial placodes, and the pronephros.

It localises to the endomembrane system. Its subcellular location is the cytoplasm. The protein localises to the perinuclear region. The catalysed reaction is S-ubiquitinyl-[E2 ubiquitin-conjugating enzyme]-L-cysteine + [acceptor protein]-L-lysine = [E2 ubiquitin-conjugating enzyme]-L-cysteine + N(6)-ubiquitinyl-[acceptor protein]-L-lysine.. Its pathway is protein modification; protein ubiquitination. E3 ubiquitin-protein ligase that catalyzes polyubiquitin chains. Converts epidermis into cement gland and neural tissue in whole embryos. This chain is E3 ubiquitin-protein ligase RNF128 (rnf128), found in Xenopus laevis (African clawed frog).